The primary structure comprises 40 residues: Large ribosomal subunit protein bL36B (40 aa).

The protein belongs to the bacterial ribosomal protein bL36 family.

In Arthrobacter sp. (strain FB24), this protein is Large ribosomal subunit protein bL36B.